We begin with the raw amino-acid sequence, 196 residues long: MINKIYGKIVDKKESSIIILAFPFEFEILVSSFCKMELRLLEDVEILTYFHFRDDDVKLFGFLNISEREVFENLIGVDGIGPKAALKILSGIKYDAFRLAIAKEDINLISKVKGIGNKIAGKIFLKLRGKLVKGDESSSYMLKFKELEQSIVNMGFDRKLVVVAFREIMLSDKFLILKEAEQEQFLFTETLKRLSV.

The tract at residues 1–63 (MINKIYGKIV…DDDVKLFGFL (63 aa)) is domain I. The tract at residues 64 to 142 (NISEREVFEN…KGDESSSYML (79 aa)) is domain II. Lysine 143 is a region of interest (flexible linker). Residues 143 to 196 (KFKELEQSIVNMGFDRKLVVVAFREIMLSDKFLILKEAEQEQFLFTETLKRLSV) are domain III.

It belongs to the RuvA family. As to quaternary structure, homotetramer. Forms an RuvA(8)-RuvB(12)-Holliday junction (HJ) complex. HJ DNA is sandwiched between 2 RuvA tetramers; dsDNA enters through RuvA and exits via RuvB. An RuvB hexamer assembles on each DNA strand where it exits the tetramer. Each RuvB hexamer is contacted by two RuvA subunits (via domain III) on 2 adjacent RuvB subunits; this complex drives branch migration. In the full resolvosome a probable DNA-RuvA(4)-RuvB(12)-RuvC(2) complex forms which resolves the HJ.

The protein resides in the cytoplasm. Its function is as follows. The RuvA-RuvB-RuvC complex processes Holliday junction (HJ) DNA during genetic recombination and DNA repair, while the RuvA-RuvB complex plays an important role in the rescue of blocked DNA replication forks via replication fork reversal (RFR). RuvA specifically binds to HJ cruciform DNA, conferring on it an open structure. The RuvB hexamer acts as an ATP-dependent pump, pulling dsDNA into and through the RuvAB complex. HJ branch migration allows RuvC to scan DNA until it finds its consensus sequence, where it cleaves and resolves the cruciform DNA. The sequence is that of Holliday junction branch migration complex subunit RuvA from Borrelia recurrentis (strain A1).